Consider the following 522-residue polypeptide: MTPNIHHDKILILDFGAQYTQLIARRIREIGVYCEVWPWDHSPEEILSFGAKGIILSGGPESTTSPGAPAAPQHVFDSDLPILGICYGMQTMAVHLGGATEAADKREFGHASVQVIYPDTLFSGLSDHPSEFRLDVWMSHGDHVSRVPPGFTITAATDRIPIAAMSREDKRWYGVQFHPEVTHTLQGQALLRRFVVDICGCQMLWTAANIIEDQIAHVRERVGCDEVILGLSGGVDSSVVAALLQKAIGSQLTCVFVDTGLLRWGEGDQVMAMFAEHMGVNVVRINAASRYFDALQGVYDPEAKRKIIGNLFIQIFEEEASKRKQAKWLAQGTIYPDVIESAGSKTGKAHVIKSHHNVGGLPEQMTLGMVEPLRELFKDEVRRLGVALGLPHAMVYRHPFPGPGLGVRILGEVKPEYAELLAKADAIFIDELHQADLYDKVSQAFAVFLPVKSVGVVGDARAYEWVIALRAVETVDFMTAQWAPLPYDFLSTVSNRIINELRGVSRVVYDISGKPPATIEWE.

The 196-residue stretch at 9–204 (KILILDFGAQ…VVDICGCQML (196 aa)) folds into the Glutamine amidotransferase type-1 domain. Cys86 functions as the Nucleophile in the catalytic mechanism. Catalysis depends on residues His178 and Glu180. Residues 205-397 (WTAANIIEDQ…LGLPHAMVYR (193 aa)) enclose the GMPS ATP-PPase domain. ATP is bound at residue 232-238 (SGGVDSS).

Homodimer.

The enzyme catalyses XMP + L-glutamine + ATP + H2O = GMP + L-glutamate + AMP + diphosphate + 2 H(+). It functions in the pathway purine metabolism; GMP biosynthesis; GMP from XMP (L-Gln route): step 1/1. Its function is as follows. Catalyzes the synthesis of GMP from XMP. The protein is GMP synthase [glutamine-hydrolyzing] (guaA) of Xylella fastidiosa (strain 9a5c).